A 52-amino-acid polypeptide reads, in one-letter code: MEAVKEKNDLFNLDVKVNAKESNDSGAEPRIASKFICTPGCAKTGSFNSYCC.

The propeptide occupies 1–30; it reads MEAVKEKNDLFNLDVKVNAKESNDSGAEPR. A cross-link (lanthionine (Ser-Cys)) is located at residues 33–37; it reads SKFIC. Positions 38 to 41 form a cross-link, beta-methyllanthionine (Thr-Cys); it reads TPGC. Residue threonine 44 is modified to (Z)-2,3-didehydrobutyrine. Residues 46-51 constitute a cross-link (lanthionine (Ser-Cys)); the sequence is SFNSYC. Positions 49–52 form a cross-link, S-(2-aminovinyl)-D-cysteine (Ser-Cys); it reads SYCC.

The protein belongs to the type A lantibiotic family. Post-translationally, maturation of lantibiotics involves the enzymatic conversion of Thr, and Ser into dehydrated AA and the formation of thioether bonds with cysteine. The C-terminal lanthionine undergoes decarboxylation. This is followed by membrane translocation and cleavage of the modified precursor. The 2,3-didehydrobutyrine is determined to be the Z-isomer.

Lanthionine-containing peptide antibiotic (lantibiotic) active on Gram-positive bacteria. The bactericidal activity of lantibiotics is based on depolarization of energized bacterial cytoplasmic membranes, initiated by the formation of aqueous transmembrane pores. The sequence is that of Lantibiotic epidermin (epiA) from Staphylococcus epidermidis.